Here is a 333-residue protein sequence, read N- to C-terminus: tRNA N6-adenosine threonylcarbamoyltransferase (333 aa).

Fe cation is bound by residues histidine 111 and histidine 115. Substrate contacts are provided by residues 134 to 138 (LVSGG), aspartate 167, glycine 180, and asparagine 272. Aspartate 300 serves as a coordination point for Fe cation.

Belongs to the KAE1 / TsaD family. Fe(2+) is required as a cofactor.

It localises to the cytoplasm. The enzyme catalyses L-threonylcarbamoyladenylate + adenosine(37) in tRNA = N(6)-L-threonylcarbamoyladenosine(37) in tRNA + AMP + H(+). Its function is as follows. Required for the formation of a threonylcarbamoyl group on adenosine at position 37 (t(6)A37) in tRNAs that read codons beginning with adenine. Is involved in the transfer of the threonylcarbamoyl moiety of threonylcarbamoyl-AMP (TC-AMP) to the N6 group of A37, together with TsaE and TsaB. TsaD likely plays a direct catalytic role in this reaction. The sequence is that of tRNA N6-adenosine threonylcarbamoyltransferase from Hamiltonella defensa subsp. Acyrthosiphon pisum (strain 5AT).